We begin with the raw amino-acid sequence, 335 residues long: uncharacterized protein (335 aa).

The region spanning 21–258 is the ABC transporter domain; that stretch reads VMTSDLRKVY…QNTYHVQGQN (238 aa). 60-67 serves as a coordination point for ATP; it reads GPNGAGKT.

This sequence belongs to the ABC transporter superfamily.

This is an uncharacterized protein from Nostoc sp. (strain PCC 7120 / SAG 25.82 / UTEX 2576).